The chain runs to 1674 residues: Maestro heat-like repeat-containing protein family member 2A (1674 aa).

The interval 1–26 (MTEAITEAAVASSEEVSEERDDLGPL) is disordered. 14 HEAT repeats span residues 73-96 (ATTE…ISTQ), 97-133 (RKVN…EMRE), 195-234 (MPYM…TVQF), 254-292 (LKVF…LLLP), 382-419 (SYPK…ADEP), 424-461 (RAIY…CGYQ), 573-612 (PAPQ…SIAP), 615-641 (ADMW…DQKA), 642-679 (WEDK…SFDS), 739-776 (KTVL…ETVK), 993-1030 (GQFG…LHAS), 1221-1263 (DPLM…SHRP), 1381-1420 (EKLL…GAPK), and 1627-1674 (LDFP…QGMS).

This is Maestro heat-like repeat-containing protein family member 2A (MROH2A) from Homo sapiens (Human).